The primary structure comprises 245 residues: Ribosomal RNA large subunit methyltransferase E (245 aa).

The tract at residues 1-26 (MTKPPVGSNRSGRKLGQKVKKGKLKA) is disordered. Residues 11–26 (SGRKLGQKVKKGKLKA) show a composition bias toward basic residues. Residues G81, W83, D104, D120, and D144 each coordinate S-adenosyl-L-methionine. K184 functions as the Proton acceptor in the catalytic mechanism.

The protein belongs to the class I-like SAM-binding methyltransferase superfamily. RNA methyltransferase RlmE family.

It is found in the cytoplasm. The catalysed reaction is uridine(2552) in 23S rRNA + S-adenosyl-L-methionine = 2'-O-methyluridine(2552) in 23S rRNA + S-adenosyl-L-homocysteine + H(+). Specifically methylates the uridine in position 2552 of 23S rRNA at the 2'-O position of the ribose in the fully assembled 50S ribosomal subunit. The sequence is that of Ribosomal RNA large subunit methyltransferase E from Sinorhizobium medicae (strain WSM419) (Ensifer medicae).